Here is a 267-residue protein sequence, read N- to C-terminus: Ubiquinone biosynthesis protein COQ4, mitochondrial (267 aa).

The transit peptide at 1–17 (MSRLKIPSQLLRGGRGF) directs the protein to the mitochondrion. 4 residues coordinate Zn(2+): H153, D154, H157, and E169.

The protein belongs to the COQ4 family. In terms of assembly, component of a multi-subunit COQ enzyme complex, composed of at least COQ3, COQ4, COQ5, COQ6, COQ7 and COQ9. It depends on Zn(2+) as a cofactor.

Its subcellular location is the mitochondrion inner membrane. The catalysed reaction is a 4-hydroxy-3-methoxy-5-(all-trans-polyprenyl)benzoate + H(+) = a 2-methoxy-6-(all-trans-polyprenyl)phenol + CO2. The protein operates within cofactor biosynthesis; ubiquinone biosynthesis. Its function is as follows. Lyase that catalyzes the C1-decarboxylation of 4-hydroxy-3-methoxy-5-(all-trans-polyprenyl)benzoic acid into 2-methoxy-6-(all-trans-polyprenyl)phenol during ubiquinone biosynthesis. This Arthroderma otae (strain ATCC MYA-4605 / CBS 113480) (Microsporum canis) protein is Ubiquinone biosynthesis protein COQ4, mitochondrial.